A 725-amino-acid chain; its full sequence is Ribosomal RNA large subunit methyltransferase K/L (725 aa).

In terms of domain architecture, THUMP spans 45 to 156 (SGYRACLWSR…RGRLSLGIDL (112 aa)).

It belongs to the methyltransferase superfamily. RlmKL family.

The protein localises to the cytoplasm. The catalysed reaction is guanosine(2445) in 23S rRNA + S-adenosyl-L-methionine = N(2)-methylguanosine(2445) in 23S rRNA + S-adenosyl-L-homocysteine + H(+). It carries out the reaction guanosine(2069) in 23S rRNA + S-adenosyl-L-methionine = N(2)-methylguanosine(2069) in 23S rRNA + S-adenosyl-L-homocysteine + H(+). Specifically methylates the guanine in position 2445 (m2G2445) and the guanine in position 2069 (m7G2069) of 23S rRNA. The chain is Ribosomal RNA large subunit methyltransferase K/L from Marinobacter nauticus (strain ATCC 700491 / DSM 11845 / VT8) (Marinobacter aquaeolei).